A 245-amino-acid polypeptide reads, in one-letter code: Lytic switch protein BZLF1 (245 aa).

The transactivation stretch occupies residues 1–167 (MMDPNSTSED…RTRKPLQPES (167 aa)). A phosphothreonine mark is found at threonine 14 and threonine 159. The tract at residues 140–167 (QLADIGAPQPAPAAAPARRTRKPLQPES) is disordered. Residues 157-194 (RRTRKPLQPESLEECDSELDIKRYKNRVASRKCRAKFK) carry the Bipartite nuclear localization signal motif. Phosphoserine occurs at positions 167, 173, and 186. The segment at 178–195 (KRYKNRVASRKCRAKFKH) is basic motif. A bZIP domain is found at 178–228 (KRYKNRVASRKCRAKFKHLLQHYREVASAKSSENDRLRLLLKQMCPSLDVD). Residues 196–228 (LLQHYREVASAKSSENDRLRLLLKQMCPSLDVD) form a leucine-zipper region. The interval 229–245 (SIIPRTPDVLHEDLLNF) is accessory activation domain.

This sequence belongs to the bZIP family. Homodimer. Interacts (via b-ZIP domain) with the DNA polymerase processivity factor BMRF1 (via N-terminus); this interaction may inhibit BZLF1-induced transcription of the BMRF1 promoter. Interacts with human UBN1, CRTC2 and RACK1. Interacts (via N-terminus) with human PAX5 (via N-terminus); this interaction inhibits BZLF1-mediated lytic viral reactivation. Interacts (via leucine-zipper domain) with host CEBPA; this interaction induces G1 host cell cycle arrest. Interacts (via C-terminus) with host TP53BP1 (via C-terminus); this interaction is involved in the activation of the viral lytic cycle. Interacts with host chromatin-remodeling ATPase INO80; this interaction participates to the activation of early lytic viral genes by BZLF1. Interacts with host regulator of chromatin SMARCA5/hSNF2H; this interaction participates to the activation of early lytic viral genes by BZLF1. Interacts with host PLSCR1/Phospholipid scramblase 1; this interaction negatively regulates the transcriptional regulatory activity of BZLF1 by preventing the formation of the BZLF1-CBP complex.

It is found in the host nucleus. In terms of biological role, transcription factor that acts as a molecular switch to induce the transition from the latent to the lytic or productive phase of the virus cycle. Mediates the switch from the latent to the lytic cycle of infection in cells containing a highly methylated viral genome. Probably binds to silenced chromatin and recruits host chromatin-remodeling enzymes. Regulates this switch by binding to 2 types of ZEBRA response elements (ZREs): the CpG-free AP-1 like elements (latency) and the methylated CpG-containing elements (lytic replication). Activates preferentially the methylated forms of the viral lytic R (BRLF1) and Na (BRRF1) gene promoters, the latters being the first genes activated during Z-mediated reactivation in latently infected cells. BZLF1 and BRLF1 act together to trigger lytic replication. Also binds the lytic origin of replication, oriLyt. Induces G1 cell cycle arrest by stabilizing the host CCAAT/enhancer binding protein CEBPA. This function is important because the lytic cycle preferentially takes place in host cells arrested in G1. The polypeptide is Lytic switch protein BZLF1 (Epstein-Barr virus (strain AG876) (HHV-4)).